A 495-amino-acid chain; its full sequence is Aspartyl/glutamyl-tRNA(Asn/Gln) amidotransferase subunit B (495 aa).

It belongs to the GatB/GatE family. GatB subfamily. Heterotrimer of A, B and C subunits.

The enzyme catalyses L-glutamyl-tRNA(Gln) + L-glutamine + ATP + H2O = L-glutaminyl-tRNA(Gln) + L-glutamate + ADP + phosphate + H(+). It catalyses the reaction L-aspartyl-tRNA(Asn) + L-glutamine + ATP + H2O = L-asparaginyl-tRNA(Asn) + L-glutamate + ADP + phosphate + 2 H(+). Allows the formation of correctly charged Asn-tRNA(Asn) or Gln-tRNA(Gln) through the transamidation of misacylated Asp-tRNA(Asn) or Glu-tRNA(Gln) in organisms which lack either or both of asparaginyl-tRNA or glutaminyl-tRNA synthetases. The reaction takes place in the presence of glutamine and ATP through an activated phospho-Asp-tRNA(Asn) or phospho-Glu-tRNA(Gln). The protein is Aspartyl/glutamyl-tRNA(Asn/Gln) amidotransferase subunit B of Gloeothece citriformis (strain PCC 7424) (Cyanothece sp. (strain PCC 7424)).